Consider the following 212-residue polypeptide: 3,4-dihydroxy-2-butanone 4-phosphate synthase (212 aa).

D-ribulose 5-phosphate is bound by residues Arg37–Glu38, Asp42, Arg150–Thr154, and Glu174. Glu38 is a binding site for Mg(2+). Mg(2+) is bound at residue His153.

It belongs to the DHBP synthase family. As to quaternary structure, homodimer. Mg(2+) serves as cofactor. Mn(2+) is required as a cofactor.

The catalysed reaction is D-ribulose 5-phosphate = (2S)-2-hydroxy-3-oxobutyl phosphate + formate + H(+). The protein operates within cofactor biosynthesis; riboflavin biosynthesis; 2-hydroxy-3-oxobutyl phosphate from D-ribulose 5-phosphate: step 1/1. In terms of biological role, catalyzes the conversion of D-ribulose 5-phosphate to formate and 3,4-dihydroxy-2-butanone 4-phosphate. This is 3,4-dihydroxy-2-butanone 4-phosphate synthase from Shewanella halifaxensis (strain HAW-EB4).